The primary structure comprises 101 residues: MIPGEIIAAAGDIELNGGLPTITIEVSNSGDRPVQVGSHYHFAETNPGLIFDRDAARGRRLDIPAGTAVRFEPGQTRQVTLIPLSGKREVFGFRQQVMGKL.

The protein belongs to the urease beta subunit family. In terms of assembly, heterotrimer of UreA (gamma), UreB (beta) and UreC (alpha) subunits. Three heterotrimers associate to form the active enzyme.

Its subcellular location is the cytoplasm. It carries out the reaction urea + 2 H2O + H(+) = hydrogencarbonate + 2 NH4(+). It functions in the pathway nitrogen metabolism; urea degradation; CO(2) and NH(3) from urea (urease route): step 1/1. The sequence is that of Urease subunit beta from Sinorhizobium fredii (strain NBRC 101917 / NGR234).